The chain runs to 471 residues: UDP-glycosyltransferase CGT (471 aa).

H24 functions as the Proton acceptor in the catalytic mechanism. Position 24 (H24) interacts with an anthocyanidin. The Charge relay role is filled by D120. T143 contributes to the UDP-alpha-D-glucose binding site. Residues 280 to 281 form a UDP region; that stretch reads SR. Residues V343, Q345, H360, W363, N364, S365, and E368 each coordinate UDP-alpha-D-glucose. Residue G383 coordinates an anthocyanidin. 2 residues coordinate UDP-alpha-D-glucose: D384 and Q385.

This sequence belongs to the UDP-glycosyltransferase family.

It catalyses the reaction a 3'-hydro-2'-hydroxy-beta-oxodihydrochalcone + UDP-alpha-D-glucose = a 3'-(beta-D-glucopyranosyl)-2'-hydroxy-beta-oxodihydrochalcone + UDP + H(+). Its function is as follows. UDP-glucose-dependent glucosyltransferase catalyzing the c-glucosylation of 2-hydroxyflavanones. In Oryza sativa subsp. japonica (Rice), this protein is UDP-glycosyltransferase CGT.